The chain runs to 96 residues: RING finger protein Z (96 aa).

A compositionally biased stretch (basic and acidic residues) spans 1-10 (MGNCRSKQES). The disordered stretch occupies residues 1–21 (MGNCRSKQESHPICPNTQTPE). Gly2 carries N-myristoyl glycine; by host lipidation. The RING-type; atypical zinc finger occupies 41–77 (CKCCWFADRNLINCSDHYLCLRCLNVMLRTSNLCNIC). Residues 91–94 (PTAP) carry the PTAP/PSAP motif motif.

The protein belongs to the arenaviridae Z protein family. In terms of assembly, interacts with protein NP; this interaction probably directs the encapsidated genome to budding sites. Interacts (via RING domain) with polymerase L; this interaction inhibits viral transcription and replication, Z partially blocks the product exit tunnel for the releasing nascent RNA product. Interacts with the glycoprotein complex; this interaction plays a role in virion budding. Interacts with host eIF4E; this interaction results in eIF4E reduced affinity for its substrate, the 5'-m7 G cap structure. Interacts (via late-budding domain) with host TSG101; this interaction is essential for budding and release of viral particles. Interacts with host RPLP0; this interaction may serve to load ribosome-like particles inside the virion. Interacts with host PML; this interaction induces PML bodies redistribution in the cytoplasm upon viral infection. Post-translationally, myristoylation is required for the role of RING finger protein Z in assembly and budding.

The protein resides in the virion. It is found in the host cytoplasm. Its subcellular location is the host perinuclear region. It localises to the host cell membrane. Functionally, plays a crucial role in virion assembly and budding. Expressed late in the virus life cycle, it acts as an inhibitor of viral transcription and RNA synthesis by interacting with the viral polymerase L. Presumably recruits the NP encapsidated genome to cellular membranes at budding sites via direct interaction with NP. Plays critical roles in the final steps of viral release by interacting with host TSG101, a member of the vacuolar protein-sorting pathway and using other cellular host proteins involved in vesicle formation pathway. The budding of the virus progeny occurs after association of protein Z with the viral glycoprotein complex SSP-GP1-GP2 at the cell periphery, step that requires myristoylation of protein Z. Also selectively represses protein production by associating with host eIF4E. In cell-based minigenome assay, has an inhibitory effect on the ribonucleoprotein machinery (vRNP), which is responsible for the replication and transcription of the viral genome. The sequence is that of RING finger protein Z from Hylaeamys megacephalus (Large-headed rice rat).